The sequence spans 1447 residues: Sister chromatid cohesion protein PDS5 homolog B (1447 aa).

The stretch at 383-419 is one HEAT repeat; it reads LLVNDHLLNFVRERTLDKRWRVRKEAMMGLAQIYKKY. Residues 1117–1447 form a disordered region; it reads KSFFTPGKPK…RRRSAKRERR (331 aa). Lys-1136 is subject to N6-acetyllysine. The span at 1137-1155 shows a compositional bias: polar residues; it reads PLSSAGKQSQTKSSRMETV. 6 positions are modified to phosphoserine: Ser-1140, Ser-1162, Ser-1166, Ser-1176, Ser-1182, and Ser-1191. Low complexity predominate over residues 1156-1167; sequence SNASSSSNPSSP. Residues 1172–1184 are compositionally biased toward basic and acidic residues; sequence GRLDSSEMDHSEN. Composition is skewed to basic and acidic residues over residues 1196–1214 and 1225–1243; these read KKSD…LEKP and QEEK…EQKP. Over residues 1245-1254 the composition is skewed to basic residues; that stretch reads GSQRSRKRGH. A DNA-binding region (a.T hook 1) is located at residues 1249–1261; it reads SRKRGHTASESDE. A Phosphothreonine modification is found at Thr-1255. Phosphoserine is present on residues Ser-1257 and Ser-1259. Residues 1265–1274 are compositionally biased toward basic and acidic residues; that stretch reads PEEKRLKEDI. Ser-1283 is subject to Phosphoserine. Residues 1287–1299 constitute a DNA-binding region (a.T hook 2); the sequence is KGKRGRPPKPLGG. A compositionally biased stretch (basic residues) spans 1310–1319; sequence TSKKGSKKKS. Phosphoserine is present on residues Ser-1319 and Ser-1334. The span at 1342-1353 shows a compositional bias: basic residues; the sequence is KSKQHRVSRRAQ. The segment covering 1355–1372 has biased composition (polar residues); that stretch reads RAESPESSAIESTQSTPQ. Phosphoserine is present on residues Ser-1358 and Ser-1366. Phosphothreonine is present on Thr-1367. Ser-1369 bears the Phosphoserine mark. Residues Thr-1370 and Thr-1381 each carry the phosphothreonine modification. The segment at residues 1372–1384 is a DNA-binding region (a.T hook 3); the sequence is QKGRGRPSKTPSP. Positions 1379 to 1388 are enriched in low complexity; that stretch reads SKTPSPSQPK. 2 positions are modified to phosphoserine: Ser-1383 and Ser-1417. The span at 1422 to 1432 shows a compositional bias: acidic residues; that stretch reads IPQEETEEEEV. The segment covering 1437 to 1447 has biased composition (basic residues); the sequence is VRRRSAKRERR.

This sequence belongs to the PDS5 family. In terms of assembly, interacts with the cohesin complex. Interacts with RAD21; the interaction is direct. Interacts with WAPL (via FGF motifs) or CDCA5 (via the FGF motif); the interaction is direct, cohesin-dependent and competitive. Widely expressed.

The protein localises to the nucleus. Functionally, regulator of sister chromatid cohesion in mitosis which may stabilize cohesin complex association with chromatin. May couple sister chromatid cohesion during mitosis to DNA replication. Cohesion ensures that chromosome partitioning is accurate in both meiotic and mitotic cells and plays an important role in DNA repair. Plays a role in androgen-induced proliferative arrest in prostate cells. The chain is Sister chromatid cohesion protein PDS5 homolog B (PDS5B) from Homo sapiens (Human).